We begin with the raw amino-acid sequence, 166 residues long: Putative transmembrane protein ORF166 (166 aa).

Transmembrane regions (helical) follow at residues 35–55, 60–80, and 124–144; these read IILVFLITMPVRFFICIFAGL, PICVLINLLPPLAIAIPFVTA, and IFCLVGIIIADVLNPILAFIN.

The protein resides in the host membrane. The protein is Putative transmembrane protein ORF166 of Acidianus convivator (ABV).